Consider the following 352-residue polypeptide: Small ribosomal subunit biogenesis GTPase RsgA 2 (352 aa).

Positions 100–257 (RQDGQIIATN…VIDTPGMREL (158 aa)) constitute a CP-type G domain. Residues 147–150 (TKAD) and 199–207 (GSSGVGKST) each bind GTP. The Zn(2+) site is built by C278, C283, H285, and C291.

Belongs to the TRAFAC class YlqF/YawG GTPase family. RsgA subfamily. In terms of assembly, monomer. Associates with 30S ribosomal subunit, binds 16S rRNA. It depends on Zn(2+) as a cofactor.

The protein localises to the cytoplasm. Its function is as follows. One of several proteins that assist in the late maturation steps of the functional core of the 30S ribosomal subunit. Helps release RbfA from mature subunits. May play a role in the assembly of ribosomal proteins into the subunit. Circularly permuted GTPase that catalyzes slow GTP hydrolysis, GTPase activity is stimulated by the 30S ribosomal subunit. The chain is Small ribosomal subunit biogenesis GTPase RsgA 2 from Lactiplantibacillus plantarum (strain ATCC BAA-793 / NCIMB 8826 / WCFS1) (Lactobacillus plantarum).